Reading from the N-terminus, the 67-residue chain is Gallinacin-6 (67 aa).

The N-terminal stretch at 1–19 (MRILYLLLSVLFVVLQGVA) is a signal peptide. Residues 20-25 (GQPYFS) constitute a propeptide that is removed on maturation. Disulfide bonds link Cys31–Cys60, Cys38–Cys53, and Cys43–Cys61.

Belongs to the beta-defensin family. As to expression, expressed in bone marrow, testis, ovary, lung and trachea. Expressed in the ovarian stroma, but not in the ovarian follicles.

The protein localises to the secreted. Its subcellular location is the cytoplasmic granule. Has bactericidal activity. Potent activity against S.typhimurium and S.entiriditis. The polypeptide is Gallinacin-6 (GAL6) (Gallus gallus (Chicken)).